We begin with the raw amino-acid sequence, 796 residues long: Probable phosphoketolase (796 aa).

The protein belongs to the XFP family. The cofactor is thiamine diphosphate.

This Clostridium acetobutylicum (strain ATCC 824 / DSM 792 / JCM 1419 / IAM 19013 / LMG 5710 / NBRC 13948 / NRRL B-527 / VKM B-1787 / 2291 / W) protein is Probable phosphoketolase.